A 185-amino-acid chain; its full sequence is Ribosome-recycling factor (185 aa).

It belongs to the RRF family.

The protein localises to the cytoplasm. Functionally, responsible for the release of ribosomes from messenger RNA at the termination of protein biosynthesis. May increase the efficiency of translation by recycling ribosomes from one round of translation to another. The polypeptide is Ribosome-recycling factor (Frankia alni (strain DSM 45986 / CECT 9034 / ACN14a)).